Reading from the N-terminus, the 1296-residue chain is MEILRGSPALSAFRITKLLSRCQDAHLPVSDIYAEYVHFADVSAPLSADEHARLQRLLQYGPSLPEHPPAGRLLLVTPRPGTISPWSSKATDIAHNCGLSQILRLERGLAFSIQGPDLNESQWKQLAALLHDRMMEAVFTDLQQAEQLFSHHQPAPVQRVDILGQGRSALEQANIKLGLALAQDEIDYLLTAFTGLGRNPTDIELYMFAQANSEHCRHKIFNADWVIDGVVQPKTLFKMIKNTFEHTPDYVLSAYKDNAAVMEGSQVGRFYATAEKGIYDYHQEEAHILMKVETHNHPTAISPWPGAATGSGGEIRDEGATGRGAKPKAGLVGFSVSNLRIPGFEQPWEENFGKPDRIVTALDIMTEGPLGGAAFNNEFGRPALLGYFRTYEERVNSHNGIELRGYHKPIMLAGGLGNIRADHVQKGEITVGAKLVVLGGPSMNIGLGGGAASSMASGQSDADLDFASVQRDNPEMERRCQEVIDRCWQLGEYNPILFIHDVGAGGLSNAMPELVNDGGRGGRFELRDILNDEPGMSPLEVWCNESQERYVLAVAPAQMALFDEICRRERAPYAVIGEATEEKHLLLNDRHFGNQPIDMPLDVLLGKTPKMLRDVTRLQAKGDALQRADISLAEAVKRIMHLPAVAEKTFLITIGDRTVTGMVTRDQMVGPWQIPVADCAVTSASLDSYYGEAMSLGERAPVALLDFAASARLAVGEALTNIAATQIGELKRIKLSANWMSAAGHPGEDAGLYDAVRAVGEELCPALEITIPVGKDSMSMKTRWQEGHEQREMTSPLSLVITAFARIEDVRRTVTPQLRTDKGDNALLLIDLGAGHNALGATALTQVYRQLGDKPADVRNVQQLAGFFNAMQRLVADQHLLAYHDRSDGGLLVTLAEMAFAGHCGVTVDIQSLGNDALAALFNEELGAVIQVRAEQRADVEKLLADHGLANCVHYLGRAVAGDTFDIRSGTDVVYSEKRSTLRLWWAETSWQMQRLRDNPDCADQEHQAKQDESDPGLNVKLTFDPAEDIAAPFILKQARPKVAVLREQGVNSHVEMAAAFHRAGFDAVDVHMSDLLAGRTDLQSFQTLVACGGFSYGDVLGAGEGWAKSILFNDRVRDEFEAFFHRPTTLALGVCNGCQMMSNLRELIPGAEHWPRFVRNLSDSFEARFSLVEVASSPSLFMQDMVGSRMPIAVSHGEGQVEVRDAAHLAALEQSHLVALRFVNNHGVVTEQYPANPNGSANGITAVTSVSGRATVMMPHPERVFRTVSNSWHPEEWGEDSPWMRMFRNARKQLG.

A disordered region spans residues 304–323 (WPGAATGSGGEIRDEGATGR). Residues 306 to 317 (GAATGSGGEIRD) and Ala677 contribute to the ATP site. Residues Asp678, Glu717, Asn721, and Asp885 each coordinate Mg(2+). Ser887 serves as a coordination point for ATP. The span at 1000 to 1013 (PDCADQEHQAKQDE) shows a compositional bias: basic and acidic residues. Residues 1000–1019 (PDCADQEHQAKQDESDPGLN) form a disordered region. The Glutamine amidotransferase type-1 domain occupies 1043–1296 (VAVLREQGVN…MFRNARKQLG (254 aa)). The active-site Nucleophile is Cys1136. Residues His1261 and Glu1263 contribute to the active site.

The protein in the N-terminal section; belongs to the FGAMS family. As to quaternary structure, monomer.

It localises to the cytoplasm. The catalysed reaction is N(2)-formyl-N(1)-(5-phospho-beta-D-ribosyl)glycinamide + L-glutamine + ATP + H2O = 2-formamido-N(1)-(5-O-phospho-beta-D-ribosyl)acetamidine + L-glutamate + ADP + phosphate + H(+). Its pathway is purine metabolism; IMP biosynthesis via de novo pathway; 5-amino-1-(5-phospho-D-ribosyl)imidazole from N(2)-formyl-N(1)-(5-phospho-D-ribosyl)glycinamide: step 1/2. Functionally, phosphoribosylformylglycinamidine synthase involved in the purines biosynthetic pathway. Catalyzes the ATP-dependent conversion of formylglycinamide ribonucleotide (FGAR) and glutamine to yield formylglycinamidine ribonucleotide (FGAM) and glutamate. The polypeptide is Phosphoribosylformylglycinamidine synthase (Yersinia pestis bv. Antiqua (strain Nepal516)).